The following is a 314-amino-acid chain: 4-hydroxy-3-methylbut-2-enyl diphosphate reductase (314 aa).

Cys-12 contacts [4Fe-4S] cluster. 2 residues coordinate (2E)-4-hydroxy-3-methylbut-2-enyl diphosphate: His-41 and His-74. Dimethylallyl diphosphate is bound by residues His-41 and His-74. Isopentenyl diphosphate is bound by residues His-41 and His-74. Cys-96 serves as a coordination point for [4Fe-4S] cluster. Residue His-124 participates in (2E)-4-hydroxy-3-methylbut-2-enyl diphosphate binding. Dimethylallyl diphosphate is bound at residue His-124. His-124 provides a ligand contact to isopentenyl diphosphate. The Proton donor role is filled by Glu-126. Thr-167 contributes to the (2E)-4-hydroxy-3-methylbut-2-enyl diphosphate binding site. Cys-197 is a [4Fe-4S] cluster binding site. (2E)-4-hydroxy-3-methylbut-2-enyl diphosphate-binding residues include Ser-225, Ser-226, Asn-227, and Ser-269. 4 residues coordinate dimethylallyl diphosphate: Ser-225, Ser-226, Asn-227, and Ser-269. Isopentenyl diphosphate contacts are provided by Ser-225, Ser-226, Asn-227, and Ser-269.

It belongs to the IspH family. The cofactor is [4Fe-4S] cluster.

It catalyses the reaction isopentenyl diphosphate + 2 oxidized [2Fe-2S]-[ferredoxin] + H2O = (2E)-4-hydroxy-3-methylbut-2-enyl diphosphate + 2 reduced [2Fe-2S]-[ferredoxin] + 2 H(+). It carries out the reaction dimethylallyl diphosphate + 2 oxidized [2Fe-2S]-[ferredoxin] + H2O = (2E)-4-hydroxy-3-methylbut-2-enyl diphosphate + 2 reduced [2Fe-2S]-[ferredoxin] + 2 H(+). Its pathway is isoprenoid biosynthesis; dimethylallyl diphosphate biosynthesis; dimethylallyl diphosphate from (2E)-4-hydroxy-3-methylbutenyl diphosphate: step 1/1. It functions in the pathway isoprenoid biosynthesis; isopentenyl diphosphate biosynthesis via DXP pathway; isopentenyl diphosphate from 1-deoxy-D-xylulose 5-phosphate: step 6/6. Functionally, catalyzes the conversion of 1-hydroxy-2-methyl-2-(E)-butenyl 4-diphosphate (HMBPP) into a mixture of isopentenyl diphosphate (IPP) and dimethylallyl diphosphate (DMAPP). Acts in the terminal step of the DOXP/MEP pathway for isoprenoid precursor biosynthesis. This is 4-hydroxy-3-methylbut-2-enyl diphosphate reductase from Haemophilus influenzae (strain 86-028NP).